An 883-amino-acid chain; its full sequence is Valine--tRNA ligase (883 aa).

A 'HIGH' region motif is present at residues 46–56; it reads PNVTGKLHLGH. The 'KMSKS' region signature appears at 520 to 524; it reads KMSKS. K523 is an ATP binding site. The stretch at 809-844 forms a coiled coil; that stretch reads LVDLLNVEEELARLEKELAKWQKELDMVGKKLSNER.

The protein belongs to the class-I aminoacyl-tRNA synthetase family. ValS type 1 subfamily. Monomer.

It is found in the cytoplasm. The catalysed reaction is tRNA(Val) + L-valine + ATP = L-valyl-tRNA(Val) + AMP + diphosphate. Functionally, catalyzes the attachment of valine to tRNA(Val). As ValRS can inadvertently accommodate and process structurally similar amino acids such as threonine, to avoid such errors, it has a 'posttransfer' editing activity that hydrolyzes mischarged Thr-tRNA(Val) in a tRNA-dependent manner. This Streptococcus pneumoniae (strain ATCC BAA-255 / R6) protein is Valine--tRNA ligase.